We begin with the raw amino-acid sequence, 309 residues long: Putative HTH-type transcriptional regulatory protein AF_1787 (309 aa).

Positions 131–185 constitute an HTH cro/C1-type domain; sequence IREARERLGLSVGDMAKMLGVSRRTVKKYEEGTDTTLSTAAKIEEIIGTFAIKEI. The H-T-H motif DNA-binding region spans 142–161; it reads VGDMAKMLGVSRRTVKKYEE.

The polypeptide is Putative HTH-type transcriptional regulatory protein AF_1787 (Archaeoglobus fulgidus (strain ATCC 49558 / DSM 4304 / JCM 9628 / NBRC 100126 / VC-16)).